We begin with the raw amino-acid sequence, 291 residues long: Probable L-ascorbate peroxidase 3, peroxisomal (291 aa).

The Proton acceptor role is filled by His41. The interval 114–133 (YVPGRRDSSDSPEEGRLPDA) is disordered. Basic and acidic residues predominate over residues 116 to 133 (PGRRDSSDSPEEGRLPDA). His161 is a binding site for heme b. 3 residues coordinate K(+): Thr162, Thr178, and Asp185. The helical transmembrane segment at 263 to 283 (LLMQTAAGVAVAAAVVAWAYL) threads the bilayer.

Belongs to the peroxidase family. Ascorbate peroxidase subfamily. It depends on heme b as a cofactor. Expressed in stems.

Its subcellular location is the peroxisome membrane. It catalyses the reaction L-ascorbate + H2O2 = L-dehydroascorbate + 2 H2O. Its function is as follows. Plays a key role in hydrogen peroxide removal. This Oryza sativa subsp. japonica (Rice) protein is Probable L-ascorbate peroxidase 3, peroxisomal.